The chain runs to 213 residues: Large ribosomal subunit protein bL25 (213 aa).

The protein belongs to the bacterial ribosomal protein bL25 family. CTC subfamily. As to quaternary structure, part of the 50S ribosomal subunit; part of the 5S rRNA/L5/L18/L25 subcomplex. Contacts the 5S rRNA. Binds to the 5S rRNA independently of L5 and L18.

Functionally, this is one of the proteins that binds to the 5S RNA in the ribosome where it forms part of the central protuberance. The protein is Large ribosomal subunit protein bL25 of Mesorhizobium japonicum (strain LMG 29417 / CECT 9101 / MAFF 303099) (Mesorhizobium loti (strain MAFF 303099)).